We begin with the raw amino-acid sequence, 508 residues long: Photosystem II CP47 reaction center protein (508 aa).

The next 6 helical transmembrane spans lie at 21-36 (SVHL…WAGS), 101-115 (IILS…IWHW), 140-156 (GVHL…FGVF), 203-218 (IAAG…FHVL), 237-252 (VLSS…AFVV), and 457-472 (SFAL…HGAR).

This sequence belongs to the PsbB/PsbC family. PsbB subfamily. As to quaternary structure, PSII is composed of 1 copy each of membrane proteins PsbA, PsbB, PsbC, PsbD, PsbE, PsbF, PsbH, PsbI, PsbJ, PsbK, PsbL, PsbM, PsbT, PsbY, PsbZ, Psb30/Ycf12, at least 3 peripheral proteins of the oxygen-evolving complex and a large number of cofactors. It forms dimeric complexes. The cofactor is Binds multiple chlorophylls. PSII binds additional chlorophylls, carotenoids and specific lipids..

It localises to the plastid. The protein localises to the chloroplast thylakoid membrane. Functionally, one of the components of the core complex of photosystem II (PSII). It binds chlorophyll and helps catalyze the primary light-induced photochemical processes of PSII. PSII is a light-driven water:plastoquinone oxidoreductase, using light energy to abstract electrons from H(2)O, generating O(2) and a proton gradient subsequently used for ATP formation. This is Photosystem II CP47 reaction center protein from Euglena gracilis.